We begin with the raw amino-acid sequence, 485 residues long: Adenosylhomocysteinase (485 aa).

Thr-60, Asp-146, and Glu-208 together coordinate substrate. Position 209–211 (209–211) interacts with NAD(+); sequence TTT. 2 residues coordinate substrate: Lys-238 and Asp-242. NAD(+)-binding positions include Asn-243, 272–277, Glu-295, Asn-330, 351–353, and Asn-399; these read GYGDVG and IGH.

It belongs to the adenosylhomocysteinase family. NAD(+) is required as a cofactor.

Its subcellular location is the cytoplasm. It catalyses the reaction S-adenosyl-L-homocysteine + H2O = L-homocysteine + adenosine. It functions in the pathway amino-acid biosynthesis; L-homocysteine biosynthesis; L-homocysteine from S-adenosyl-L-homocysteine: step 1/1. Its function is as follows. May play a key role in the regulation of the intracellular concentration of adenosylhomocysteine. This Streptomyces coelicolor (strain ATCC BAA-471 / A3(2) / M145) protein is Adenosylhomocysteinase.